Consider the following 761-residue polypeptide: uncharacterized protein (761 aa).

Met-1 carries the N-acetylmethionine modification. 3 disordered regions span residues 1-82 (MEHQ…SSSS), 229-320 (SNII…SALA), and 590-640 (FNRA…PEQQ). Positions 13–27 (NSGSNRVTVYNGTTL) are enriched in polar residues. The span at 28–45 (PTMPKSATPTSSSTTVTT) shows a compositional bias: low complexity. Composition is skewed to polar residues over residues 244 to 259 (TPVS…SSPE), 266 to 276 (NTTSSSSTSDH), 590 to 604 (FNRA…STDD), and 627 to 640 (SKNS…PEQQ).

In terms of processing, phosphorylated by CDC28.

This is an uncharacterized protein from Saccharomyces cerevisiae (strain ATCC 204508 / S288c) (Baker's yeast).